Consider the following 194-residue polypeptide: Bis(5'-nucleosyl)-tetraphosphatase, symmetrical (194 aa).

The HD domain occupies Arg-18–Gly-132. An ADP-binding site is contributed by His-21. Fe cation-binding residues include His-21, His-50, and Asp-51. Residues Asp-51 to Lys-54, His-83, His-109 to Thr-110, Asp-127, Arg-133, and Thr-172 to Thr-177 contribute to the ADP site. Asp-127 serves as a coordination point for Fe cation.

This sequence belongs to the Ap4A hydrolase YqeK family. As to quaternary structure, homodimer.

The enzyme catalyses P(1),P(4)-bis(5'-adenosyl) tetraphosphate + H2O = 2 ADP + 2 H(+). With respect to regulation, inhibited by EDTA. Functionally, hydrolyzes diadenosine 5',5'''-P1,P4-tetraphosphate (Ap4A) to yield ADP. Can also hydrolyze Ap3A, Ap5A, Ap4G, Ap4U and Gp4G, always releasing ADP or GDP as one of the products, but it exhibits a marked preference for Ap4A, which is mainly exerted at the substrate affinity level. This is Bis(5'-nucleosyl)-tetraphosphatase, symmetrical from Staphylococcus aureus (strain NCTC 8325 / PS 47).